A 152-amino-acid polypeptide reads, in one-letter code: Deoxyuridine 5'-triphosphate nucleotidohydrolase (152 aa).

Substrate is bound by residues 71–73 (RSG), Asn84, 88–90 (LID), and Met98.

This sequence belongs to the dUTPase family. It depends on Mg(2+) as a cofactor.

The enzyme catalyses dUTP + H2O = dUMP + diphosphate + H(+). The protein operates within pyrimidine metabolism; dUMP biosynthesis; dUMP from dCTP (dUTP route): step 2/2. Functionally, this enzyme is involved in nucleotide metabolism: it produces dUMP, the immediate precursor of thymidine nucleotides and it decreases the intracellular concentration of dUTP so that uracil cannot be incorporated into DNA. In Shewanella woodyi (strain ATCC 51908 / MS32), this protein is Deoxyuridine 5'-triphosphate nucleotidohydrolase.